A 99-amino-acid chain; its full sequence is Integration host factor subunit alpha (99 aa).

Positions 49–73 are disordered; it reads FGNFDLRDKNQRPGRNPKTGEDIPI.

The protein belongs to the bacterial histone-like protein family. Heterodimer of an alpha and a beta chain.

Functionally, this protein is one of the two subunits of integration host factor, a specific DNA-binding protein that functions in genetic recombination as well as in transcriptional and translational control. This chain is Integration host factor subunit alpha (ihfA), found in Serratia marcescens.